A 272-amino-acid chain; its full sequence is uncharacterized protein (272 aa).

The interval 101 to 130 (CPTGKKNKAPSSLIPKISKTSTSSLTKEDE) is disordered. A compositionally biased stretch (low complexity) spans 110 to 125 (PSSLIPKISKTSTSSL). Phosphoserine is present on Ser142.

This is an uncharacterized protein from Arabidopsis thaliana (Mouse-ear cress).